The primary structure comprises 323 residues: Beta-ketoacyl-[acyl-carrier-protein] synthase III (323 aa).

Active-site residues include C113 and H250. An ACP-binding region spans residues 251–255 (QANKR). Residue N280 is part of the active site.

It belongs to the thiolase-like superfamily. FabH family. In terms of assembly, homodimer.

It is found in the cytoplasm. The enzyme catalyses malonyl-[ACP] + acetyl-CoA + H(+) = 3-oxobutanoyl-[ACP] + CO2 + CoA. It functions in the pathway lipid metabolism; fatty acid biosynthesis. Its function is as follows. Catalyzes the condensation reaction of fatty acid synthesis by the addition to an acyl acceptor of two carbons from malonyl-ACP. Catalyzes the first condensation reaction which initiates fatty acid synthesis and may therefore play a role in governing the total rate of fatty acid production. Possesses both acetoacetyl-ACP synthase and acetyl transacylase activities. Its substrate specificity determines the biosynthesis of branched-chain and/or straight-chain of fatty acids. The sequence is that of Beta-ketoacyl-[acyl-carrier-protein] synthase III from Brucella canis (strain ATCC 23365 / NCTC 10854 / RM-666).